The sequence spans 172 residues: NADH-quinone oxidoreductase subunit B 1 (172 aa).

Residues cysteine 42, cysteine 43, cysteine 107, and cysteine 137 each contribute to the [4Fe-4S] cluster site.

This sequence belongs to the complex I 20 kDa subunit family. NDH-1 is composed of 14 different subunits. Subunits NuoB, C, D, E, F, and G constitute the peripheral sector of the complex. [4Fe-4S] cluster is required as a cofactor.

It localises to the cell inner membrane. The catalysed reaction is a quinone + NADH + 5 H(+)(in) = a quinol + NAD(+) + 4 H(+)(out). NDH-1 shuttles electrons from NADH, via FMN and iron-sulfur (Fe-S) centers, to quinones in the respiratory chain. Couples the redox reaction to proton translocation (for every two electrons transferred, four hydrogen ions are translocated across the cytoplasmic membrane), and thus conserves the redox energy in a proton gradient. The sequence is that of NADH-quinone oxidoreductase subunit B 1 from Anaeromyxobacter sp. (strain Fw109-5).